The following is a 429-amino-acid chain: Glutamyl-tRNA reductase (429 aa).

Substrate-binding positions include 49-52 (TCNR), S108, 113-115 (EAQ), and Q119. The active-site Nucleophile is C50. Residue 188 to 193 (GAGEMS) participates in NADP(+) binding.

The protein belongs to the glutamyl-tRNA reductase family. As to quaternary structure, homodimer.

The catalysed reaction is (S)-4-amino-5-oxopentanoate + tRNA(Glu) + NADP(+) = L-glutamyl-tRNA(Glu) + NADPH + H(+). It functions in the pathway porphyrin-containing compound metabolism; protoporphyrin-IX biosynthesis; 5-aminolevulinate from L-glutamyl-tRNA(Glu): step 1/2. Its function is as follows. Catalyzes the NADPH-dependent reduction of glutamyl-tRNA(Glu) to glutamate 1-semialdehyde (GSA). The polypeptide is Glutamyl-tRNA reductase (Rubrobacter xylanophilus (strain DSM 9941 / JCM 11954 / NBRC 16129 / PRD-1)).